The chain runs to 635 residues: Extracellular metalloproteinase 1 (635 aa).

An N-terminal signal peptide occupies residues 1–19 (MHGLLLAAGLLSLPLHVLA). A propeptide spanning residues 20 to 246 (HPQPSTSTSL…VHNVVDYVAH (227 aa)) is cleaved from the precursor. Asn287 is a glycosylation site (N-linked (GlcNAc...) asparagine). Zn(2+) is bound at residue His430. Glu431 is an active-site residue. His434 serves as a coordination point for Zn(2+). Residues Asn475, Asn594, and Asn623 are each glycosylated (N-linked (GlcNAc...) asparagine).

The protein belongs to the peptidase M36 family. Requires Zn(2+) as cofactor.

It localises to the secreted. Its function is as follows. Secreted metalloproteinase probably acting as a virulence factor. This Arthroderma benhamiae (Trichophyton mentagrophytes) protein is Extracellular metalloproteinase 1 (MEP1).